Reading from the N-terminus, the 112-residue chain is MLRKIKVTFIINDEEERTVEAPIGLSILEIAHSNDLDLEGACEGSLACATCHVMLEEEFYNKLKKPTEAEEDMLDLAFGLTDTSRLGCQIILTEELDGIKVRLPSATRNIKL.

Positions 5–107 (IKVTFIINDE…GIKVRLPSAT (103 aa)) constitute a 2Fe-2S ferredoxin-type domain. [2Fe-2S] cluster is bound by residues Cys42, Cys48, Cys51, and Cys88.

Belongs to the adrenodoxin/putidaredoxin family. The cofactor is [2Fe-2S] cluster.

Its function is as follows. Ferredoxin are iron-sulfur proteins that transfer electrons in a wide variety of metabolic reactions. This Rickettsia prowazekii (strain Madrid E) protein is 2Fe-2S ferredoxin (fdxB).